The sequence spans 1058 residues: Carbamoyl phosphate synthase large chain (1058 aa).

A carboxyphosphate synthetic domain region spans residues 1–401 (MPKRKDIQKI…SLLKACRSLE (401 aa)). The ATP site is built by Arg129, Arg169, Gly175, Gly176, Arg208, Ile210, Glu215, Gly241, Ile242, His243, Gln284, and Glu298. In terms of domain architecture, ATP-grasp 1 spans 133–327 (KQLMQELDQP…IAKLAAKIAV (195 aa)). Mg(2+) is bound by residues Gln284, Glu298, and Asn300. Positions 284, 298, and 300 each coordinate Mn(2+). The oligomerization domain stretch occupies residues 402–546 (IGVCHNEMTS…YSTYELENES (145 aa)). Residues 547-929 (VQSNKESILV…ALYKAFEANN (383 aa)) are carbamoyl phosphate synthetic domain. The region spanning 671–861 (EKALKELGIP…MAQIATKLIL (191 aa)) is the ATP-grasp 2 domain. Arg707, Ser746, Ile748, Glu752, Gly777, Val778, His779, Ser780, Gln820, and Glu832 together coordinate ATP. Mg(2+)-binding residues include Gln820, Glu832, and Asn834. Positions 820, 832, and 834 each coordinate Mn(2+). The region spanning 930 to 1058 (SHLSEFGQIV…ESRCFNIEAI (129 aa)) is the MGS-like domain. Residues 930 to 1058 (SHLSEFGQIV…ESRCFNIEAI (129 aa)) form an allosteric domain region.

The protein belongs to the CarB family. In terms of assembly, composed of two chains; the small (or glutamine) chain promotes the hydrolysis of glutamine to ammonia, which is used by the large (or ammonia) chain to synthesize carbamoyl phosphate. Tetramer of heterodimers (alpha,beta)4. Mg(2+) serves as cofactor. It depends on Mn(2+) as a cofactor.

The catalysed reaction is hydrogencarbonate + L-glutamine + 2 ATP + H2O = carbamoyl phosphate + L-glutamate + 2 ADP + phosphate + 2 H(+). The enzyme catalyses hydrogencarbonate + NH4(+) + 2 ATP = carbamoyl phosphate + 2 ADP + phosphate + 2 H(+). It participates in amino-acid biosynthesis; L-arginine biosynthesis; carbamoyl phosphate from bicarbonate: step 1/1. The protein operates within pyrimidine metabolism; UMP biosynthesis via de novo pathway; (S)-dihydroorotate from bicarbonate: step 1/3. Large subunit of the glutamine-dependent carbamoyl phosphate synthetase (CPSase). CPSase catalyzes the formation of carbamoyl phosphate from the ammonia moiety of glutamine, carbonate, and phosphate donated by ATP, constituting the first step of 2 biosynthetic pathways, one leading to arginine and/or urea and the other to pyrimidine nucleotides. The large subunit (synthetase) binds the substrates ammonia (free or transferred from glutamine from the small subunit), hydrogencarbonate and ATP and carries out an ATP-coupled ligase reaction, activating hydrogencarbonate by forming carboxy phosphate which reacts with ammonia to form carbamoyl phosphate. The polypeptide is Carbamoyl phosphate synthase large chain (Streptococcus pyogenes serotype M49 (strain NZ131)).